The chain runs to 123 residues: Small ribosomal subunit protein uS8 (123 aa).

This sequence belongs to the universal ribosomal protein uS8 family. As to quaternary structure, part of the 30S ribosomal subunit. Contacts proteins S5 and S12.

In terms of biological role, one of the primary rRNA binding proteins, it binds directly to 16S rRNA central domain where it helps coordinate assembly of the platform of the 30S subunit. This Carsonella ruddii (strain PV) protein is Small ribosomal subunit protein uS8 (rpsH).